Consider the following 334-residue polypeptide: Pre-mRNA leakage protein 39 (334 aa).

Interacts with MLP1 and MLP2.

The protein localises to the nucleus membrane. Functionally, involved in the nuclear retention of improperly spliced pre-mRNAs. In Saccharomyces cerevisiae (strain ATCC 204508 / S288c) (Baker's yeast), this protein is Pre-mRNA leakage protein 39 (PML39).